We begin with the raw amino-acid sequence, 96 residues long: SAGA complex subunit SUS1 (96 aa).

K68 is covalently cross-linked (Glycyl lysine isopeptide (Lys-Gly) (interchain with G-Cter in ubiquitin)).

This sequence belongs to the ENY2 family. In terms of assembly, component of the 1.8 MDa SAGA (Spt-Ada-Gcn5 acetyltransferase) complex, which is composed of 19 subunits TRA1, SPT7, TAF5, NGG1/ADA3, SGF73, SPT20/ADA5, SPT8, TAF12, TAF6, HFI1/ADA1, UBP8, GCN5, ADA2, SPT3, SGF29, TAF10, TAF9, SGF11 and SUS1. The SAGA complex is composed of 4 modules, namely the HAT (histone acetyltransferase) module (GCN5, ADA2, NGG1/ADA3 and SGF29), the DUB (deubiquitinating) module (UBP8, SGF11, SGF73 and SUS1), the core or TAF (TBP-associated factor) module (TAF5, TAF6, TAF9, TAF10 and TAF12), and the Tra1 or SPT (Suppressor of Ty) module (TRA1, HFI1/ADA1, SPT3, SPT7, SPT8 and SPT20/ADA5). The Tra1/SPT module binds activators, the core module recruits TBP (TATA-binding protein), the HAT module contains the histone H3 acetyltransferase GCN5, and the DUB module comprises the histone H2B deubiquitinase UBP8. Also identified in an altered form of SAGA, named SALSA (SAGA altered, Spt8 absent) or SLIK (SAGA-like) complex, which contains a C-terminal truncated form of SPT7 and is missing SPT8. However, it has been shown that the SAGA and SAGA-like SALSA/SLIK transcriptional coactivators are structurally and biochemically equivalent. Component of the nuclear pore complex (NPC)-associated TREX-2 complex (transcription and export complex 2), composed of at least SUS1, SAC3, THP1, SEM1, and CDC31. TREX-2 contains 2 SUS1 chains. The TREX-2 complex interacts with the mRNA export factors MEX67, MTR2 and SUB2, and the nucleoporin NUP1. Interacts directly with THP1, SAC3. Interacts directly with SGF11 and UBP8. Interacts with YRA1, MEX67 and with the RNA polymerase II.

The protein localises to the nucleus. Its subcellular location is the nucleoplasm. It localises to the cytoplasm. It is found in the P-body. Functionally, involved in mRNA export coupled transcription activation by association with both the TREX-2 and the SAGA complexes. SAGA acts as a general cofactor required for essentially all RNA polymerase II transcription. At the promoters, SAGA is required for transcription pre-initiation complex (PIC) recruitment. It influences RNA polymerase II transcriptional activity through different activities such as TBP interaction (via core/TAF module) and promoter selectivity, interaction with transcription activators (via Tra1/SPT module), and chromatin modification through histone acetylation (via HAT module) and deubiquitination (via DUB module). SAGA preferentially acetylates histones H3 (to form H3K9ac, H3K14ac, H3K18ac and H3K23ac) and H2B and deubiquitinates histone H2B. SAGA interacts with DNA via upstream activating sequences (UASs). Also identified in a modified version of SAGA named SALSA or SLIK. The cleavage of SPT7 and the absence of the SPT8 subunit in SLIK neither drive any major conformational differences in its structure compared with SAGA, nor significantly affect HAT, DUB, or DNA-binding activities. Within the SAGA complex, participates in a subcomplex with SGF11, SGF73 and UBP8 required for deubiquitination of H2B and for the maintenance of steady-state H3 methylation levels. The TREX-2 complex functions in docking export-competent ribonucleoprotein particles (mRNPs) to the nuclear entrance of the nuclear pore complex (nuclear basket), by association with components of the nuclear mRNA export machinery (MEX67-MTR2 and SUB2) in the nucleoplasm and the nucleoporin NUP1 at the nuclear basket. TREX-2 participates in mRNA export and accurate chromatin positioning in the nucleus by tethering genes to the nuclear periphery. SUS1 also has a role in mRNP biogenesis and maintenance of genome integrity through preventing RNA-mediated genome instability. Has a role in response to DNA damage induced by methyl methane sulfonate (MMS) and replication arrest induced by hydroxyurea. May also be involved in cytoplasmic mRNA decay by interaction with components of P-bodies. This chain is SAGA complex subunit SUS1, found in Saccharomyces cerevisiae (strain ATCC 204508 / S288c) (Baker's yeast).